We begin with the raw amino-acid sequence, 390 residues long: Heat stress transcription factor B-2b (390 aa).

The disordered stretch occupies residues 165 to 212 (TRDGSPVLSGEEQVISSSSSPEPPLVLPQAPSGSGSGGVASGDVGDEN). The stretch at 206-237 (GDVGDENERLRRENAQLARELSQMRKLCNNIL) forms a coiled coil. A hydrophobic repeat HR-A/B region spans residues 215–244 (LRRENAQLARELSQMRKLCNNILLLMSKYA). A Nuclear localization signal motif is present at residues 318–322 (RKRMR). The interval 322 to 363 (RHDGGGDDDHAATVKAEPMDGRPHGKDEQSAETQAWPIYRPR) is disordered. Residues 323–350 (HDGGGDDDHAATVKAEPMDGRPHGKDEQ) show a composition bias toward basic and acidic residues.

Belongs to the HSF family. Class B subfamily. Homotrimer. Post-translationally, exhibits temperature-dependent phosphorylation.

It is found in the nucleus. In terms of biological role, transcriptional regulator that specifically binds DNA of heat shock promoter elements (HSE). The chain is Heat stress transcription factor B-2b (HSFB2B) from Oryza sativa subsp. japonica (Rice).